A 512-amino-acid chain; its full sequence is Proline--tRNA ligase (512 aa).

A compositionally biased stretch (acidic residues) spans 460–470 (SDEDDEQDTTD). The disordered stretch occupies residues 460 to 484 (SDEDDEQDTTDENMGVNNDTTVESN).

Belongs to the class-II aminoacyl-tRNA synthetase family. ProS type 3 subfamily. Homodimer.

The protein localises to the cytoplasm. The catalysed reaction is tRNA(Pro) + L-proline + ATP = L-prolyl-tRNA(Pro) + AMP + diphosphate. Its function is as follows. Catalyzes the attachment of proline to tRNA(Pro) in a two-step reaction: proline is first activated by ATP to form Pro-AMP and then transferred to the acceptor end of tRNA(Pro). In Haloquadratum walsbyi (strain DSM 16790 / HBSQ001), this protein is Proline--tRNA ligase.